The following is a 341-amino-acid chain: Aspartate carbamoyltransferase catalytic subunit (341 aa).

Carbamoyl phosphate-binding residues include arginine 74 and threonine 75. An L-aspartate-binding site is contributed by lysine 102. Carbamoyl phosphate contacts are provided by arginine 124, histidine 152, and glutamine 155. L-aspartate is bound by residues arginine 190 and arginine 244. Carbamoyl phosphate is bound by residues glycine 285 and proline 286.

The protein belongs to the aspartate/ornithine carbamoyltransferase superfamily. ATCase family. In terms of assembly, heterododecamer (2C3:3R2) of six catalytic PyrB chains organized as two trimers (C3), and six regulatory PyrI chains organized as three dimers (R2).

It catalyses the reaction carbamoyl phosphate + L-aspartate = N-carbamoyl-L-aspartate + phosphate + H(+). It participates in pyrimidine metabolism; UMP biosynthesis via de novo pathway; (S)-dihydroorotate from bicarbonate: step 2/3. Functionally, catalyzes the condensation of carbamoyl phosphate and aspartate to form carbamoyl aspartate and inorganic phosphate, the committed step in the de novo pyrimidine nucleotide biosynthesis pathway. This is Aspartate carbamoyltransferase catalytic subunit from Novosphingobium aromaticivorans (strain ATCC 700278 / DSM 12444 / CCUG 56034 / CIP 105152 / NBRC 16084 / F199).